Here is a 1038-residue protein sequence, read N- to C-terminus: Inner tegument protein (1038 aa).

The interval 545–1038 (WGITPPVDVG…VPGNTSGSDP (494 aa)) is interaction with large tegument protein.

This sequence belongs to the herpesviridae inner tegument protein family. As to quaternary structure, interacts (via C-terminus) with the large tegument protein/LTP (via N-terminus).

The protein localises to the virion tegument. It localises to the host cytoplasm. Its subcellular location is the host nucleus. It is found in the host Golgi apparatus. The protein resides in the host trans-Golgi network. Plays an essential role in cytoplasmic secondary envelopment during viral egress. Interacts with the capsid via the large tegument protein/LTP and participates in its transport to the host trans-Golgi network (TGN) where secondary envelopment occurs. Modulates tegumentation and capsid accumulation at the viral assembly complex. This chain is Inner tegument protein (21), found in Homo sapiens (Human).